A 241-amino-acid chain; its full sequence is Exosome complex component RRP41 homolog (241 aa).

Position 1 is an N-acetylmethionine (Met-1).

The protein belongs to the RNase PH family. Component of the RNA exosome complex. Interacts with RPP4.

Its subcellular location is the cytoplasm. The protein resides in the nucleus. The protein localises to the nucleolus. Non-catalytic component of the RNA exosome complex which has 3'-&gt;5' exoribonuclease activity and participates in a multitude of cellular RNA processing, maturation and degradation events. In vitro, is a processive phosphorolytic exonuclease and requires a single-stranded poly(A) tail on the substrate RNA for its activity. Can complement the growth defect of a yeast mutant lacking RRP41 exonuclease. Required for normal development of female gametophytes. The polypeptide is Exosome complex component RRP41 homolog (Arabidopsis thaliana (Mouse-ear cress)).